The sequence spans 168 residues: Ribosome maturation factor RimM (168 aa).

The PRC barrel domain maps to 96-168 (EDEYFITDLI…VMIVRLLEGL (73 aa)).

This sequence belongs to the RimM family. In terms of assembly, binds ribosomal protein uS19.

The protein resides in the cytoplasm. Functionally, an accessory protein needed during the final step in the assembly of 30S ribosomal subunit, possibly for assembly of the head region. Essential for efficient processing of 16S rRNA. May be needed both before and after RbfA during the maturation of 16S rRNA. It has affinity for free ribosomal 30S subunits but not for 70S ribosomes. This is Ribosome maturation factor RimM from Caldanaerobacter subterraneus subsp. tengcongensis (strain DSM 15242 / JCM 11007 / NBRC 100824 / MB4) (Thermoanaerobacter tengcongensis).